The following is a 133-amino-acid chain: Interleukin-5 (133 aa).

The signal sequence occupies residues 1-20; sequence MRRMLLHLSVLTLSCVWATA. N-linked (GlcNAc...) asparagine glycosylation is found at N46, N75, and N89.

Belongs to the IL-5 family. In terms of assembly, homodimer; disulfide-linked. Interacts with IL5RA. Interacts with CSF2RB. As to expression, expressed in lymphoid cells, including spleen, thymus, lymph nodes and peripheral blood mononuclear cells.

It is found in the secreted. Homodimeric cytokine expressed predominantly by T-lymphocytes and NK cells that plays an important role in the survival, differentiation, and chemotaxis of eosinophils. Also acts on activated and resting B-cells to induce immunoglobulin production, growth, and differentiation. Mechanistically, exerts its biological effects through a receptor composed of IL5RA subunit and the cytokine receptor common subunit beta/CSF2RB. Binding to the receptor leads to activation of various kinases including LYN, SYK and JAK2 and thereby propagates signals through the RAS-MAPK and JAK-STAT5 pathways respectively. The chain is Interleukin-5 (Il5) from Mus musculus (Mouse).